Here is a 400-residue protein sequence, read N- to C-terminus: Double C2-like domain-containing protein alpha (400 aa).

The tract at residues 1 to 89 (MRGRRGDRMT…DSYDSDDATA (89 aa)) is interaction with UNC13D and DYNLT1. 2 consecutive C2 domains span residues 89–211 (ALGT…HFNI) and 251–384 (ERGR…ERWH). Asp120, Asp126, Asp181, Asp183, Asp282, Asp288, Asp342, Asp344, and Asp350 together coordinate Ca(2+). The tract at residues 215-400 (RQVPLASPSS…PPAAGALSSA (186 aa)) is interaction with UNC13D.

In terms of assembly, interacts (via N-terminus) with UNC13A. Interacts with cytoplasmic dynein light chain DYNLT1. Interacts with UNC13D. Ca(2+) serves as cofactor. As to expression, predominantly expressed in brain. Also expressed in testis.

Its subcellular location is the lysosome. It is found in the cytoplasmic vesicle. The protein resides in the secretory vesicle. It localises to the synaptic vesicle membrane. The protein localises to the synapse. Its subcellular location is the synaptosome. Calcium sensor which most probably regulates fusion of vesicles with membranes. Binds calcium and phospholipids. May be involved in calcium dependent neurotransmitter release through the interaction with UNC13A. May be involved in calcium-dependent spontaneous release of neurotransmitter in absence of action potentials in neuronal cells. Regulates Ca(2+)-dependent secretory lysosome exocytosis in mast cells. This is Double C2-like domain-containing protein alpha (DOC2A) from Homo sapiens (Human).